Reading from the N-terminus, the 402-residue chain is 4-hydroxy-3-methylbut-2-en-1-yl diphosphate synthase (ferredoxin) (402 aa).

[4Fe-4S] cluster-binding residues include cysteine 311, cysteine 314, cysteine 345, and glutamate 352.

The protein belongs to the IspG family. The cofactor is [4Fe-4S] cluster.

It carries out the reaction (2E)-4-hydroxy-3-methylbut-2-enyl diphosphate + 2 oxidized [2Fe-2S]-[ferredoxin] + H2O = 2-C-methyl-D-erythritol 2,4-cyclic diphosphate + 2 reduced [2Fe-2S]-[ferredoxin] + H(+). It functions in the pathway isoprenoid biosynthesis; isopentenyl diphosphate biosynthesis via DXP pathway; isopentenyl diphosphate from 1-deoxy-D-xylulose 5-phosphate: step 5/6. Converts 2C-methyl-D-erythritol 2,4-cyclodiphosphate (ME-2,4cPP) into 1-hydroxy-2-methyl-2-(E)-butenyl 4-diphosphate, using ferredoxin I (PetF) as the reducing agent. The chain is 4-hydroxy-3-methylbut-2-en-1-yl diphosphate synthase (ferredoxin) from Thermosynechococcus vestitus (strain NIES-2133 / IAM M-273 / BP-1).